We begin with the raw amino-acid sequence, 288 residues long: Intermediate transcription factor 3 small subunit (288 aa).

It belongs to the orthopoxvirus OPG134 family. Heterodimer of a 45 kDa (A23R) and a 32 kDa (A8R) subunit to form the virus intermediate transcription factor (VITF)-3.

Its function is as follows. Acts with RNA polymerase to initiate transcription from intermediate gene promoters. The protein is Intermediate transcription factor 3 small subunit (OPG134) of Homo sapiens (Human).